The primary structure comprises 365 residues: 25S rRNA (uridine(2843)-N(3))-methyltransferase (365 aa).

This sequence belongs to the class I-like SAM-binding methyltransferase superfamily.

The protein localises to the cytoplasm. Its subcellular location is the nucleus. The catalysed reaction is uridine(2843) in 25S rRNA + S-adenosyl-L-methionine = N(3)-methyluridine(2843) in 25S rRNA + S-adenosyl-L-homocysteine + H(+). In terms of biological role, S-adenosyl-L-methionine-dependent methyltransferase that specifically methylates the N(3) position of uridine 2843 (m3U2843) in 25S rRNA. The protein is 25S rRNA (uridine(2843)-N(3))-methyltransferase (BMT6) of Saccharomyces cerevisiae (strain ATCC 204508 / S288c) (Baker's yeast).